Here is a 711-residue protein sequence, read N- to C-terminus: Receptor-like protein 43 (711 aa).

An N-terminal signal peptide occupies residues 1-30; sequence MKGFWNSKSTIRITLSFIFLFISQFSDVLA. Residues 31–666 lie on the Extracellular side of the membrane; that stretch reads APTRHLCRPE…EDEEVISWIA (636 aa). Residues Asn78, Asn114, Asn143, Asn167, and Asn191 are each glycosylated (N-linked (GlcNAc...) asparagine). 8 LRR repeats span residues 120-143, 144-168, 170-192, 193-216, 218-240, 241-266, 268-288, and 289-316; these read LHFL…SIEN, LSHL…IGNL, HLTF…IGNL, SHLT…IGGL, HLTT…IGNL, SNLT…NLSQ, TRLD…LWTL, and PNLF…SMGH. 4 N-linked (GlcNAc...) asparagine glycosylation sites follow: Asn239, Asn242, Asn252, and Asn263. Asn295, Asn323, Asn347, Asn362, and Asn372 each carry an N-linked (GlcNAc...) asparagine glycan. An LRR 9; degenerate repeat occupies 317 to 334; the sequence is LLGSNNNFTGKIPSFICE. LRR repeat units lie at residues 335-358, 360-384, 386-406, 407-430, 431-452, 453-476, 519-543, 544-567, 568-591, and 593-616; these read LRSL…CMGN, KSNL…IFEI, RSLD…LRFF, STLE…LTSL, PKLQ…EASF, LKLR…YFVK, LTIY…IGLL, KELL…MGKL, TALE…IGNL, and FLSC…QFLT. Asn420 carries an N-linked (GlcNAc...) asparagine glycan. Asn466 carries N-linked (GlcNAc...) asparagine glycosylation. 3 N-linked (GlcNAc...) asparagine glycosylation sites follow: Asn550, Asn590, and Asn598. A helical transmembrane segment spans residues 667–687; sequence AAIGFIPGIVLGLTIGYILVF. At 688 to 711 the chain is on the cytoplasmic side; sequence YKPEWFIKTFGRNNCRRRSTTTTH.

It belongs to the RLP family.

The protein localises to the cell membrane. This chain is Receptor-like protein 43, found in Arabidopsis thaliana (Mouse-ear cress).